The following is a 212-amino-acid chain: Ribosomal RNA small subunit methyltransferase G (212 aa).

Residues glycine 80, leucine 85, 131–132, and arginine 146 contribute to the S-adenosyl-L-methionine site; that span reads AE.

It belongs to the methyltransferase superfamily. RNA methyltransferase RsmG family.

Its subcellular location is the cytoplasm. The enzyme catalyses guanosine(527) in 16S rRNA + S-adenosyl-L-methionine = N(7)-methylguanosine(527) in 16S rRNA + S-adenosyl-L-homocysteine. Specifically methylates the N7 position of guanine in position 527 of 16S rRNA. The chain is Ribosomal RNA small subunit methyltransferase G from Stenotrophomonas maltophilia (strain K279a).